Consider the following 204-residue polypeptide: Methylthioribulose-1-phosphate dehydratase (204 aa).

Zn(2+) contacts are provided by His-96 and His-98.

Belongs to the aldolase class II family. MtnB subfamily. Zn(2+) serves as cofactor.

The enzyme catalyses 5-(methylsulfanyl)-D-ribulose 1-phosphate = 5-methylsulfanyl-2,3-dioxopentyl phosphate + H2O. The protein operates within amino-acid biosynthesis; L-methionine biosynthesis via salvage pathway; L-methionine from S-methyl-5-thio-alpha-D-ribose 1-phosphate: step 2/6. Catalyzes the dehydration of methylthioribulose-1-phosphate (MTRu-1-P) into 2,3-diketo-5-methylthiopentyl-1-phosphate (DK-MTP-1-P). This is Methylthioribulose-1-phosphate dehydratase from Methylococcus capsulatus (strain ATCC 33009 / NCIMB 11132 / Bath).